The following is a 644-amino-acid chain: Exoribonuclease 2 (644 aa).

The RNB domain maps to Arg189–Lys516. The S1 motif domain maps to Asp561–Val643.

Belongs to the RNR ribonuclease family. RNase II subfamily.

It localises to the cytoplasm. The catalysed reaction is Exonucleolytic cleavage in the 3'- to 5'-direction to yield nucleoside 5'-phosphates.. Its function is as follows. Involved in mRNA degradation. Hydrolyzes single-stranded polyribonucleotides processively in the 3' to 5' direction. The sequence is that of Exoribonuclease 2 from Escherichia fergusonii (strain ATCC 35469 / DSM 13698 / CCUG 18766 / IAM 14443 / JCM 21226 / LMG 7866 / NBRC 102419 / NCTC 12128 / CDC 0568-73).